The following is a 130-amino-acid chain: Small ribosomal subunit protein uS9 (130 aa).

This sequence belongs to the universal ribosomal protein uS9 family.

This is Small ribosomal subunit protein uS9 from Shewanella piezotolerans (strain WP3 / JCM 13877).